We begin with the raw amino-acid sequence, 529 residues long: Peptide chain release factor 3 (529 aa).

Positions 11 to 280 constitute a tr-type G domain; the sequence is AKRRTFAIIS…GLVEWAPAPM (270 aa). Residues 20–27, 88–92, and 142–145 contribute to the GTP site; these read SHPDAGKT, DTPGH, and NKLD.

It belongs to the TRAFAC class translation factor GTPase superfamily. Classic translation factor GTPase family. PrfC subfamily.

The protein localises to the cytoplasm. Its function is as follows. Increases the formation of ribosomal termination complexes and stimulates activities of RF-1 and RF-2. It binds guanine nucleotides and has strong preference for UGA stop codons. It may interact directly with the ribosome. The stimulation of RF-1 and RF-2 is significantly reduced by GTP and GDP, but not by GMP. This chain is Peptide chain release factor 3, found in Yersinia pestis bv. Antiqua (strain Antiqua).